The sequence spans 402 residues: MIVVEKVDKIPTAKRLVEIVERKGQGHPDYIADGISEWVSRYLSRYYLEHFGVILHHNVDKTLVVGGQAAPKFGGGEVIQPIYIIVSGRATSEVKTKDGTVKIPLGTIVIQAARDWLKSHFRFLDPDVHTIIDYRIGQGSADLVGIYDLGVRGVPLANDTSVGVGYAPLTPLEELVYKTERLLNSRDFKSKYPEVGEDVKVMGVRVGKEVKLTVACAMISRLVKDKSHYISVKEDVKRAIEDLAAKIMPDYNVEVTVNAADKPEYDIFYLTVTGTSAEHGDDGMTGRGNKANGLITPMRSMSLEAAAGKNPVSHVGKIYNVVAQRIADRIYKEVKDVVEVYVEVVSQIGKPINEPKILNVEILSSGELTGELRREAEAIAKEEMDRITQVTELILRGEVSLY.

137 to 142 (GQGSAD) is an ATP binding site.

Belongs to the AdoMet synthase 2 family. Mg(2+) serves as cofactor.

The catalysed reaction is L-methionine + ATP + H2O = S-adenosyl-L-methionine + phosphate + diphosphate. Its pathway is amino-acid biosynthesis; S-adenosyl-L-methionine biosynthesis; S-adenosyl-L-methionine from L-methionine: step 1/1. Catalyzes the formation of S-adenosylmethionine from methionine and ATP. The sequence is that of S-adenosylmethionine synthase from Pyrobaculum calidifontis (strain DSM 21063 / JCM 11548 / VA1).